The chain runs to 353 residues: UPF0283 membrane protein YcjF (353 aa).

A run of 3 helical transmembrane segments spans residues 70–90 (MVMG…VQWT), 100–120 (VALG…GSVV), and 213–233 (ESTL…FIAW).

The protein belongs to the UPF0283 family.

It localises to the cell inner membrane. This Salmonella schwarzengrund (strain CVM19633) protein is UPF0283 membrane protein YcjF.